Here is a 217-residue protein sequence, read N- to C-terminus: Imidazole glycerol phosphate synthase subunit HisH (217 aa).

The Glutamine amidotransferase type-1 domain maps to 3 to 217; the sequence is TIAIVDYGMG…IYRNFVHWKP (215 aa). Cysteine 82 (nucleophile) is an active-site residue. Catalysis depends on residues histidine 197 and glutamate 199.

As to quaternary structure, heterodimer of HisH and HisF.

It localises to the cytoplasm. The enzyme catalyses 5-[(5-phospho-1-deoxy-D-ribulos-1-ylimino)methylamino]-1-(5-phospho-beta-D-ribosyl)imidazole-4-carboxamide + L-glutamine = D-erythro-1-(imidazol-4-yl)glycerol 3-phosphate + 5-amino-1-(5-phospho-beta-D-ribosyl)imidazole-4-carboxamide + L-glutamate + H(+). It carries out the reaction L-glutamine + H2O = L-glutamate + NH4(+). Its pathway is amino-acid biosynthesis; L-histidine biosynthesis; L-histidine from 5-phospho-alpha-D-ribose 1-diphosphate: step 5/9. IGPS catalyzes the conversion of PRFAR and glutamine to IGP, AICAR and glutamate. The HisH subunit catalyzes the hydrolysis of glutamine to glutamate and ammonia as part of the synthesis of IGP and AICAR. The resulting ammonia molecule is channeled to the active site of HisF. The protein is Imidazole glycerol phosphate synthase subunit HisH of Ralstonia nicotianae (strain ATCC BAA-1114 / GMI1000) (Ralstonia solanacearum).